A 94-amino-acid chain; its full sequence is Small ribosomal subunit protein bS18 (94 aa).

It belongs to the bacterial ribosomal protein bS18 family. As to quaternary structure, part of the 30S ribosomal subunit. Forms a tight heterodimer with protein bS6.

Binds as a heterodimer with protein bS6 to the central domain of the 16S rRNA, where it helps stabilize the platform of the 30S subunit. The chain is Small ribosomal subunit protein bS18 from Polaromonas sp. (strain JS666 / ATCC BAA-500).